The sequence spans 61 residues: Photosystem II reaction center protein K (61 aa).

A propeptide spanning residues 1–24 is cleaved from the precursor; it reads MLNIFSLICICLNSALHSSSFFFA. The helical transmembrane segment at 32-52 threads the bilayer; that stretch reads FFNPIVDFMPVIPVLFFLLAL.

It belongs to the PsbK family. PSII is composed of 1 copy each of membrane proteins PsbA, PsbB, PsbC, PsbD, PsbE, PsbF, PsbH, PsbI, PsbJ, PsbK, PsbL, PsbM, PsbT, PsbX, PsbY, PsbZ, Psb30/Ycf12, at least 3 peripheral proteins of the oxygen-evolving complex and a large number of cofactors. It forms dimeric complexes.

It localises to the plastid. Its subcellular location is the chloroplast thylakoid membrane. One of the components of the core complex of photosystem II (PSII). PSII is a light-driven water:plastoquinone oxidoreductase that uses light energy to abstract electrons from H(2)O, generating O(2) and a proton gradient subsequently used for ATP formation. It consists of a core antenna complex that captures photons, and an electron transfer chain that converts photonic excitation into a charge separation. The chain is Photosystem II reaction center protein K from Drimys granadensis.